Here is a 73-residue protein sequence, read N- to C-terminus: DNA-directed RNA polymerase subunit omega (73 aa).

The protein belongs to the RNA polymerase subunit omega family. In terms of assembly, in cyanobacteria the RNAP catalytic core is composed of 2 alpha, 1 beta, 1 beta', 1 gamma and 1 omega subunit. When a sigma factor is associated with the core the holoenzyme is formed, which can initiate transcription.

It carries out the reaction RNA(n) + a ribonucleoside 5'-triphosphate = RNA(n+1) + diphosphate. Functionally, promotes RNA polymerase assembly. Latches the N- and C-terminal regions of the beta' subunit thereby facilitating its interaction with the beta and alpha subunits. This is DNA-directed RNA polymerase subunit omega from Gloeobacter violaceus (strain ATCC 29082 / PCC 7421).